The sequence spans 101 residues: Carboxysome shell vertex protein CcmL (101 aa).

The BMV domain maps to 1 to 84 (MQIAKVRGTV…VDAAVVAIID (84 aa)).

It belongs to the CcmL/EutN family. CcmL subfamily. As to quaternary structure, homopentamer. Interacts with full-length CcmM.

The protein resides in the carboxysome. In terms of biological role, probably forms vertices in the carboxysome, a polyhedral inclusion where RuBisCO (ribulose bisphosphate carboxylase, rbcL-rbcS) is sequestered. Has been modeled to induce curvature upon insertion into an otherwise flat hexagonal molecular layer of CcmK subunits. The polypeptide is Carboxysome shell vertex protein CcmL (Nostoc sp. (strain PCC 7120 / SAG 25.82 / UTEX 2576)).